The following is a 459-amino-acid chain: Bifunctional protein GlmU (459 aa).

A pyrophosphorylase region spans residues 1 to 229 (MSNYAIILAA…FDESLGVNDR (229 aa)). UDP-N-acetyl-alpha-D-glucosamine is bound by residues 8 to 11 (LAAG), Lys-22, Gln-72, and 77 to 78 (GT). Asp-102 is a binding site for Mg(2+). The UDP-N-acetyl-alpha-D-glucosamine site is built by Gly-139, Glu-154, Asn-169, and Asn-227. Residue Asn-227 coordinates Mg(2+). The segment at 230-250 (VALATAEKVMRHRIARQHMVN) is linker. Residues 251 to 459 (GVTVVNPDSA…NKKPHHPSQK (209 aa)) form an N-acetyltransferase region. UDP-N-acetyl-alpha-D-glucosamine-binding residues include Arg-332 and Lys-350. The active-site Proton acceptor is His-362. Residues Tyr-365 and Asn-376 each coordinate UDP-N-acetyl-alpha-D-glucosamine. Residues Ala-379, 385-386 (NY), Ser-404, Ala-422, and Arg-439 contribute to the acetyl-CoA site.

This sequence in the N-terminal section; belongs to the N-acetylglucosamine-1-phosphate uridyltransferase family. It in the C-terminal section; belongs to the transferase hexapeptide repeat family. Homotrimer. It depends on Mg(2+) as a cofactor.

It is found in the cytoplasm. It catalyses the reaction alpha-D-glucosamine 1-phosphate + acetyl-CoA = N-acetyl-alpha-D-glucosamine 1-phosphate + CoA + H(+). It carries out the reaction N-acetyl-alpha-D-glucosamine 1-phosphate + UTP + H(+) = UDP-N-acetyl-alpha-D-glucosamine + diphosphate. The protein operates within nucleotide-sugar biosynthesis; UDP-N-acetyl-alpha-D-glucosamine biosynthesis; N-acetyl-alpha-D-glucosamine 1-phosphate from alpha-D-glucosamine 6-phosphate (route II): step 2/2. Its pathway is nucleotide-sugar biosynthesis; UDP-N-acetyl-alpha-D-glucosamine biosynthesis; UDP-N-acetyl-alpha-D-glucosamine from N-acetyl-alpha-D-glucosamine 1-phosphate: step 1/1. It participates in bacterial outer membrane biogenesis; LPS lipid A biosynthesis. Catalyzes the last two sequential reactions in the de novo biosynthetic pathway for UDP-N-acetylglucosamine (UDP-GlcNAc). The C-terminal domain catalyzes the transfer of acetyl group from acetyl coenzyme A to glucosamine-1-phosphate (GlcN-1-P) to produce N-acetylglucosamine-1-phosphate (GlcNAc-1-P), which is converted into UDP-GlcNAc by the transfer of uridine 5-monophosphate (from uridine 5-triphosphate), a reaction catalyzed by the N-terminal domain. The chain is Bifunctional protein GlmU from Streptococcus agalactiae serotype III (strain NEM316).